The chain runs to 248 residues: 2,3-bisphosphoglycerate-dependent phosphoglycerate mutase (248 aa).

Residues 10 to 17, 23 to 24, arginine 62, 89 to 92, lysine 100, 116 to 117, and 183 to 184 contribute to the substrate site; these read RHGQSEWN, TG, ERHY, RR, and GN. Histidine 11 functions as the Tele-phosphohistidine intermediate in the catalytic mechanism. Glutamate 89 functions as the Proton donor/acceptor in the catalytic mechanism.

Belongs to the phosphoglycerate mutase family. BPG-dependent PGAM subfamily.

The enzyme catalyses (2R)-2-phosphoglycerate = (2R)-3-phosphoglycerate. It functions in the pathway carbohydrate degradation; glycolysis; pyruvate from D-glyceraldehyde 3-phosphate: step 3/5. Catalyzes the interconversion of 2-phosphoglycerate and 3-phosphoglycerate. The chain is 2,3-bisphosphoglycerate-dependent phosphoglycerate mutase from Corynebacterium glutamicum (strain ATCC 13032 / DSM 20300 / JCM 1318 / BCRC 11384 / CCUG 27702 / LMG 3730 / NBRC 12168 / NCIMB 10025 / NRRL B-2784 / 534).